Reading from the N-terminus, the 68-residue chain is MNTDQQKVSEIFQSSKEKLQGDAKVVSDAFKKMASQDKDGKTTDADESEKHNYQEQYNKLKGAGHKKE.

Position 1 is an N-acetylmethionine (Met1). Residues 1–14 (MNTDQQKVSEIFQS) show a composition bias toward polar residues. Disordered regions lie at residues 1 to 21 (MNTD…KLQG) and 33 to 68 (MASQ…HKKE). Residues 1 to 32 (MNTDQQKVSEIFQSSKEKLQGDAKVVSDAFKK) form an inhibitory domain region. The span at 33–53 (MASQDKDGKTTDADESEKHNY) shows a compositional bias: basic and acidic residues.

Belongs to the protease inhibitor I34 family.

Its function is as follows. Specific and potent inhibitor for yeast aspartic protease A (yscA). The proteinase acts as a folding template stabilizing the helical conformation in the inhibitor, which results in the potent and specific blockage of the proteolytic activity. The protein is Protease A inhibitor 3 (PAI3) of Saccharomyces cerevisiae (strain ATCC 204508 / S288c) (Baker's yeast).